Reading from the N-terminus, the 240-residue chain is Uridylate kinase (240 aa).

12–15 (KLSG) lines the ATP pocket. Residues 20-25 (GKQGFG) are involved in allosteric activation by GTP. Glycine 54 serves as a coordination point for UMP. 2 residues coordinate ATP: glycine 55 and arginine 59. UMP is bound by residues aspartate 74 and 135–142 (TGNPYFST). Residues asparagine 163, tyrosine 169, and aspartate 172 each contribute to the ATP site.

This sequence belongs to the UMP kinase family. In terms of assembly, homohexamer.

Its subcellular location is the cytoplasm. The enzyme catalyses UMP + ATP = UDP + ADP. It functions in the pathway pyrimidine metabolism; CTP biosynthesis via de novo pathway; UDP from UMP (UMPK route): step 1/1. With respect to regulation, allosterically activated by GTP. Inhibited by UTP. Catalyzes the reversible phosphorylation of UMP to UDP. The sequence is that of Uridylate kinase from Geobacillus thermodenitrificans (strain NG80-2).